The primary structure comprises 1123 residues: Inner tegument protein (1123 aa).

Disordered regions lie at residues 1–27 and 1047–1123; these read MADRGLPSEAPVVTTSPAGPPSDGPMQ and RPLA…TSYQ. Positions 568 to 1123 are interaction with large tegument protein; that stretch reads WDITPTTPAT…PTDLPLTSYQ (556 aa).

The protein belongs to the herpesviridae inner tegument protein family. Interacts (via C-terminus) with the large tegument protein/LTP (via N-terminus). Interacts with host DST. Interacts with host RIGI; this interaction inhibits RIGI activation. Interacts with host CGAS; this interaction inhibits host CGAS activation. Interacts with host TAOK3.

The protein localises to the virion tegument. The protein resides in the host cytoplasm. Its subcellular location is the host nucleus. It is found in the host Golgi apparatus. It localises to the host trans-Golgi network. The catalysed reaction is L-asparaginyl-[protein] + H2O = L-aspartyl-[protein] + NH4(+). The enzyme catalyses L-glutaminyl-[protein] + H2O = L-glutamyl-[protein] + NH4(+). Plays an essential role in cytoplasmic secondary envelopment during viral egress. Interacts with the capsid via the large tegument protein/LTP and participates in its transport to the host trans-Golgi network (TGN) where secondary envelopment occurs. Modulates tegumentation and capsid accumulation at the viral assembly complex. Plays a role in microtubule-based retrograde axonal transport to promote neuroinvasion. Also plays a role in the inhibition of host immune response by acting as a viral deamidase. Deamidates host RIGI on two asparagines which becomes unable to sense viral dsRNA. In turn, its ability to trigger antiviral immune response and restrict viral replication is inhibited. Also deamidates a critical asparagine on host CGAS which abolishes cGAMP synthesis and downstream innate immune activation. The sequence is that of Inner tegument protein (UL37) from Homo sapiens (Human).